The primary structure comprises 205 residues: Large ribosomal subunit protein uL3 (205 aa).

The protein belongs to the universal ribosomal protein uL3 family. In terms of assembly, part of the 50S ribosomal subunit. Forms a cluster with proteins L14 and L19.

Functionally, one of the primary rRNA binding proteins, it binds directly near the 3'-end of the 23S rRNA, where it nucleates assembly of the 50S subunit. The chain is Large ribosomal subunit protein uL3 from Bacteroides thetaiotaomicron (strain ATCC 29148 / DSM 2079 / JCM 5827 / CCUG 10774 / NCTC 10582 / VPI-5482 / E50).